Here is a 193-residue protein sequence, read N- to C-terminus: Major intrinsically disordered NOTCH2-binding receptor 1-like homolog (193 aa).

Phosphoserine is present on S82. N128 carries N-linked (GlcNAc...) asparagine glycosylation. The chain crosses the membrane as a helical span at residues 172–192 (GLILLLVASILVTIVTLSTIF).

Belongs to the MINAR family. As to quaternary structure, interacts with NOTCH2. In terms of tissue distribution, widely expressed in the cortex and Purkinje cells of cerebellum. Expressed in the inner ear, mainly in the hair cells, spiral ganglia, the spiral limbus, and the stria vascularis.

It is found in the lysosome membrane. Its subcellular location is the endoplasmic reticulum membrane. Its function is as follows. Binds cholesterol and may regulate the distribution and homeostasis of cholesterol in hair cells. May play a role in angiogenesis. The protein is Major intrinsically disordered NOTCH2-binding receptor 1-like homolog of Mus musculus (Mouse).